Reading from the N-terminus, the 204-residue chain is Elongation factor Ts (204 aa).

Positions 80 to 83 (TDFV) are involved in Mg(2+) ion dislocation from EF-Tu.

This sequence belongs to the EF-Ts family.

It localises to the cytoplasm. Its function is as follows. Associates with the EF-Tu.GDP complex and induces the exchange of GDP to GTP. It remains bound to the aminoacyl-tRNA.EF-Tu.GTP complex up to the GTP hydrolysis stage on the ribosome. This is Elongation factor Ts from Caldicellulosiruptor bescii (strain ATCC BAA-1888 / DSM 6725 / KCTC 15123 / Z-1320) (Anaerocellum thermophilum).